Reading from the N-terminus, the 698-residue chain is Zinc finger CCCH domain-containing protein 7 (698 aa).

Residues 1–11 show a composition bias toward pro residues; the sequence is MEEPSPVPPAA. Disordered stretches follow at residues 1 to 23, 56 to 95, 109 to 137, and 272 to 300; these read MEEP…PPTT, HAAR…GGDR, APHE…PQGT, and GSLD…SGNS. 2 stretches are compositionally biased toward low complexity: residues 12–21 and 65–74; these read APASLAAAPP and EPAAAAAIPP. The segment covering 281–300 has biased composition (acidic residues); the sequence is EEGEIEGDTQNLDADDSGNS. C3H1-type zinc fingers lie at residues 429 to 456, 458 to 485, and 486 to 511; these read PKVV…HDTT, LTKS…HELS, and KYPC…HVIP. Disordered regions lie at residues 512 to 553 and 607 to 682; these read TAEG…GEPA and TEKH…QHEV. Composition is skewed to polar residues over residues 535–548 and 665–680; these read CQEQ…STVY and SLPT…STQH.

This Oryza sativa subsp. japonica (Rice) protein is Zinc finger CCCH domain-containing protein 7.